The primary structure comprises 456 residues: MNVPRETIAAIATAQGRGGVGIVRVSGPLAGRAAEAIIGRTLKPRFAHYGPFVDDAGQVLDEGIALYFPGPNSFTGEDVLELQGHGGPIVLDMLLQRCLQLGSRLARPGEFSERAFLNDKLDLAQAEAIADLIEASSAQAARNALRSLQGAFSRRVDNLTEKLISLRIYVEAAIDFPEEEIDFLADGHVLNMLDDVRAELSTVLREAGQGALLRDGMTVVIAGRPNAGKSSLLNALAGREAAIVTEIAGTTRDVLREHIHIDGMPLHVVDTAGLRDTQDQVEMIGVQRALKAIGEADRILLVVDATAPEAADPFALWPEFLEQRPDPAKVTLIRNKADLSGDPIDLQTSVDGHVTISLSARSGGAGLELLREHLKACMGYEQTSESSFSARRRHLEALRHASDSLEHGRAQLTLAGAGELLAEDLRQAQQALGEITGAFSSDDLLGRIFSSFCIGK.

3 residues coordinate (6S)-5-formyl-5,6,7,8-tetrahydrofolate: arginine 24, glutamate 81, and lysine 120. The region spanning 216–379 is the TrmE-type G domain; it reads GMTVVIAGRP…LREHLKACMG (164 aa). Asparagine 226 contacts K(+). Residues 226–231, 245–251, 270–273, 335–338, and 359–361 each bind GTP; these read NAGKSS, TEIAGTT, DTAG, NKAD, and SAR. Serine 230 is a binding site for Mg(2+). The K(+) site is built by threonine 245, isoleucine 247, and threonine 250. Threonine 251 lines the Mg(2+) pocket. Lysine 456 is a (6S)-5-formyl-5,6,7,8-tetrahydrofolate binding site.

This sequence belongs to the TRAFAC class TrmE-Era-EngA-EngB-Septin-like GTPase superfamily. TrmE GTPase family. In terms of assembly, homodimer. Heterotetramer of two MnmE and two MnmG subunits. K(+) is required as a cofactor.

The protein resides in the cytoplasm. Functionally, exhibits a very high intrinsic GTPase hydrolysis rate. Involved in the addition of a carboxymethylaminomethyl (cmnm) group at the wobble position (U34) of certain tRNAs, forming tRNA-cmnm(5)s(2)U34. This is tRNA modification GTPase MnmE from Pseudomonas savastanoi pv. phaseolicola (strain 1448A / Race 6) (Pseudomonas syringae pv. phaseolicola (strain 1448A / Race 6)).